Here is a 72-residue protein sequence, read N- to C-terminus: SRY-related protein AES4 (72 aa).

The HMG box DNA-binding region spans 1–69 (VKRPMNAFMV…KHMADYPDYK (69 aa)).

It is found in the nucleus. The chain is SRY-related protein AES4 from Alligator mississippiensis (American alligator).